The sequence spans 358 residues: Type II methyltransferase M.HpaII (358 aa).

The 325-residue stretch at 32-356 folds into the SAM-dependent MTase C5-type domain; the sequence is FTFIDLFAGI…KKILEKLGNL (325 aa). Cys-103 is a catalytic residue.

The protein belongs to the class I-like SAM-binding methyltransferase superfamily. C5-methyltransferase family. As to quaternary structure, monomer.

The catalysed reaction is a 2'-deoxycytidine in DNA + S-adenosyl-L-methionine = a 5-methyl-2'-deoxycytidine in DNA + S-adenosyl-L-homocysteine + H(+). Functionally, a methylase that recognizes the double-stranded sequence 5'-CCGG-3', methylates C-2 on both strands, and protects the DNA from cleavage by the HpaII endonuclease. This chain is Type II methyltransferase M.HpaII, found in Haemophilus parainfluenzae.